The chain runs to 423 residues: Histidine--tRNA ligase (423 aa).

The protein belongs to the class-II aminoacyl-tRNA synthetase family. As to quaternary structure, homodimer.

Its subcellular location is the cytoplasm. The enzyme catalyses tRNA(His) + L-histidine + ATP = L-histidyl-tRNA(His) + AMP + diphosphate + H(+). This chain is Histidine--tRNA ligase, found in Phytoplasma mali (strain AT).